A 279-amino-acid polypeptide reads, in one-letter code: Acyl-[acyl-carrier-protein]--UDP-N-acetylglucosamine O-acyltransferase (279 aa).

The tract at residues 260–279 is disordered; the sequence is AAKEAFQEESVDKEGALVES.

It belongs to the transferase hexapeptide repeat family. LpxA subfamily. As to quaternary structure, homotrimer.

Its subcellular location is the cytoplasm. It carries out the reaction a (3R)-hydroxyacyl-[ACP] + UDP-N-acetyl-alpha-D-glucosamine = a UDP-3-O-[(3R)-3-hydroxyacyl]-N-acetyl-alpha-D-glucosamine + holo-[ACP]. Its pathway is glycolipid biosynthesis; lipid IV(A) biosynthesis; lipid IV(A) from (3R)-3-hydroxytetradecanoyl-[acyl-carrier-protein] and UDP-N-acetyl-alpha-D-glucosamine: step 1/6. Involved in the biosynthesis of lipid A, a phosphorylated glycolipid that anchors the lipopolysaccharide to the outer membrane of the cell. This Chlamydia abortus (strain DSM 27085 / S26/3) (Chlamydophila abortus) protein is Acyl-[acyl-carrier-protein]--UDP-N-acetylglucosamine O-acyltransferase.